Reading from the N-terminus, the 209-residue chain is Imidazole glycerol phosphate synthase subunit HisH (209 aa).

The region spanning 1 to 205 is the Glutamine amidotransferase type-1 domain; that stretch reads MIAIIDYGMG…KGVVESWKSS (205 aa). Residue Cys79 is the Nucleophile of the active site. Active-site residues include His180 and Glu182.

In terms of assembly, heterodimer of HisH and HisF.

It is found in the cytoplasm. The enzyme catalyses 5-[(5-phospho-1-deoxy-D-ribulos-1-ylimino)methylamino]-1-(5-phospho-beta-D-ribosyl)imidazole-4-carboxamide + L-glutamine = D-erythro-1-(imidazol-4-yl)glycerol 3-phosphate + 5-amino-1-(5-phospho-beta-D-ribosyl)imidazole-4-carboxamide + L-glutamate + H(+). The catalysed reaction is L-glutamine + H2O = L-glutamate + NH4(+). It participates in amino-acid biosynthesis; L-histidine biosynthesis; L-histidine from 5-phospho-alpha-D-ribose 1-diphosphate: step 5/9. Its function is as follows. IGPS catalyzes the conversion of PRFAR and glutamine to IGP, AICAR and glutamate. The HisH subunit catalyzes the hydrolysis of glutamine to glutamate and ammonia as part of the synthesis of IGP and AICAR. The resulting ammonia molecule is channeled to the active site of HisF. The sequence is that of Imidazole glycerol phosphate synthase subunit HisH from Bacillus cereus (strain ATCC 10987 / NRS 248).